A 327-amino-acid chain; its full sequence is (-)-delta-cadinene synthase (327 aa).

The Mg(2+) site is built by aspartate 84, aspartate 85, asparagine 222, threonine 226, and glutamate 230.

The protein belongs to the terpene synthase family.

It catalyses the reaction (2E,6E)-farnesyl diphosphate = (-)-delta-cadinene + diphosphate. Functionally, catalyzes the conversion of (2E,6E)-farnesyl diphosphate into (-)-delta-cadinene. Cyclization mechanism involves an intermediate nerolidyl diphosphate leading to a helminthogermacradienyl cation. The protein is (-)-delta-cadinene synthase of Streptomyces clavuligerus.